We begin with the raw amino-acid sequence, 279 residues long: Diaminopimelate epimerase (279 aa).

Substrate is bound by residues N12, Q45, and N65. C74 (proton donor) is an active-site residue. Residues 75-76, N162, N195, and 213-214 each bind substrate; these read GN and ER. Catalysis depends on C222, which acts as the Proton acceptor. Position 223–224 (223–224) interacts with substrate; it reads GT.

The protein belongs to the diaminopimelate epimerase family. As to quaternary structure, homodimer.

It localises to the cytoplasm. It catalyses the reaction (2S,6S)-2,6-diaminopimelate = meso-2,6-diaminopimelate. The protein operates within amino-acid biosynthesis; L-lysine biosynthesis via DAP pathway; DL-2,6-diaminopimelate from LL-2,6-diaminopimelate: step 1/1. Functionally, catalyzes the stereoinversion of LL-2,6-diaminopimelate (L,L-DAP) to meso-diaminopimelate (meso-DAP), a precursor of L-lysine and an essential component of the bacterial peptidoglycan. The sequence is that of Diaminopimelate epimerase from Shewanella woodyi (strain ATCC 51908 / MS32).